A 234-amino-acid polypeptide reads, in one-letter code: Inner membrane protein YbhL (234 aa).

Over M1–Q23 the chain is Periplasmic. A helical membrane pass occupies residues V24–N44. Residues S45–R56 are Cytoplasmic-facing. Residues V57 to I77 form a helical membrane-spanning segment. Residues Q78–K79 lie on the Periplasmic side of the membrane. A helical transmembrane segment spans residues L80–L100. The Cytoplasmic portion of the chain corresponds to S101–S102. A helical transmembrane segment spans residues I103–F123. The Periplasmic portion of the chain corresponds to G124 to D136. Residues L137–V157 traverse the membrane as a helical segment. Over N158–S163 the chain is Cytoplasmic. A helical transmembrane segment spans residues E164–Y184. At D185–K206 the chain is on the periplasmic side. The chain crosses the membrane as a helical span at residues Y207–L227. Topologically, residues R228–R234 are cytoplasmic.

It belongs to the BI1 family.

The protein resides in the cell inner membrane. This is Inner membrane protein YbhL (ybhL) from Escherichia coli (strain K12).